Consider the following 73-residue polypeptide: Serine rich endogenous peptide 1 (73 aa).

Residues 1-28 (MGMSGSSGLVHVLMLLLLLSILFHHTES) form the signal peptide. The disordered stretch occupies residues 48-73 (YKPNTAVETPPSRSRRGGGGQNTGAD). An SCOOP motif motif is present at residues 53-67 (AVETPPSRSRRGGGG). A SxS motif essential for MIK2 binding motif is present at residues 59-61 (SRS). The segment covering 64–73 (GGGGQNTGAD) has biased composition (gly residues).

The protein belongs to the serine rich endogenous peptide (SCOOP) phytocytokine family. As to quaternary structure, interacts with MIK2 (via extracellular leucine-rich repeat domain); this interaction triggers the formation of complex between MIK2 and the BAK1/SERK3 and SERK4 coreceptors, and subsequent BAK1 activation by phosphorylation. As to expression, mostly expressed in leaves and flowers, and, to a lower extent, in seedlings shoots.

The protein localises to the cell membrane. Its subcellular location is the secreted. It is found in the extracellular space. The protein resides in the apoplast. Functionally, brassicaceae-specific phytocytokine (plant endogenous peptide released into the apoplast) perceived by MIK2 in a BAK1/SERK3 and SERK4 coreceptors-dependent manner, that modulates various physiological and antimicrobial processes including growth prevention and reactive oxygen species (ROS) response regulation. The polypeptide is Serine rich endogenous peptide 1 (Arabidopsis thaliana (Mouse-ear cress)).